Here is a 377-residue protein sequence, read N- to C-terminus: N-acetyldiaminopimelate deacetylase (377 aa).

Aspartate 70 is an active-site residue. Glutamate 129 acts as the Proton acceptor in catalysis.

This sequence belongs to the peptidase M20A family. N-acetyldiaminopimelate deacetylase subfamily.

It carries out the reaction N-acetyl-(2S,6S)-2,6-diaminopimelate + H2O = (2S,6S)-2,6-diaminopimelate + acetate. The protein operates within amino-acid biosynthesis; L-lysine biosynthesis via DAP pathway; LL-2,6-diaminopimelate from (S)-tetrahydrodipicolinate (acetylase route): step 3/3. Catalyzes the conversion of N-acetyl-diaminopimelate to diaminopimelate and acetate. The chain is N-acetyldiaminopimelate deacetylase from Streptococcus thermophilus (strain CNRZ 1066).